The sequence spans 373 residues: Cobalt-precorrin-5B C(1)-methyltransferase (373 aa).

It belongs to the CbiD family.

It carries out the reaction Co-precorrin-5B + S-adenosyl-L-methionine = Co-precorrin-6A + S-adenosyl-L-homocysteine. It participates in cofactor biosynthesis; adenosylcobalamin biosynthesis; cob(II)yrinate a,c-diamide from sirohydrochlorin (anaerobic route): step 6/10. Catalyzes the methylation of C-1 in cobalt-precorrin-5B to form cobalt-precorrin-6A. This chain is Cobalt-precorrin-5B C(1)-methyltransferase, found in Listeria welshimeri serovar 6b (strain ATCC 35897 / DSM 20650 / CCUG 15529 / CIP 8149 / NCTC 11857 / SLCC 5334 / V8).